The sequence spans 415 residues: Corticotropin-releasing factor receptor 1 (415 aa).

A signal peptide spans 1 to 23 (MGRRPQLRLVKALLLLGLNSISA). Topologically, residues 24–111 (SLQDQHCESL…CQEILSEGEK (88 aa)) are extracellular. Disulfide bonds link Cys30–Cys54, Cys44–Cys87, and Cys68–Cys102. Asn38, Asn45, Asn51, Asn78, Asn90, and Asn98 each carry an N-linked (GlcNAc...) asparagine glycan. The interval 99 to 108 (HSECQEILSE) is important for peptide agonist binding. A helical transmembrane segment spans residues 112 to 142 (SKAHYHIAVIINYLGHCISLAALLVAFVLFL). Residues 143 to 149 (RLRSIRC) are Cytoplasmic-facing. The chain crosses the membrane as a helical span at residues 150–174 (VRNIIHWNLISAFILRNATWFVVQL). Over 175–189 (TMSPEVHQSNVGWCR) the chain is Extracellular. Cysteines 188 and 258 form a disulfide. A helical membrane pass occupies residues 190–218 (LVTAAYNYFHVTNFFWMFGEGCYLHTAVV). At 219–225 (LTYSTDR) the chain is on the cytoplasmic side. The helical transmembrane segment at 226–253 (LRKWMFICIGWGVPFPIIVAWAIGKLYY) threads the bilayer. The Extracellular portion of the chain corresponds to 254-269 (DNEKCWFGKRPGVYTD). The chain crosses the membrane as a helical span at residues 270-295 (YIYQGPMILVLLINFIFLFNIVRILM). The important for antagonist binding stretch occupies residues 280-290 (LLINFIFLFNI). Residues 296–306 (TKLRASTTSET) are Cytoplasmic-facing. Position 301 is a phosphoserine; by PKA (Ser301). A helical transmembrane segment spans residues 307-331 (IQYRKAVKATLVLLPLLGITYMLFF). Topologically, residues 332-338 (VNPGEDE) are extracellular. Residues 339–368 (VSRVVFIYFNSFLESFQGFFVSVFYCFLNS) form a helical membrane-spanning segment. At 369–415 (EVRSAIRKRWHRWQDKHSIRARVARAMSIPTSPTRVSFHSIKQSTAV) the chain is on the cytoplasmic side.

Belongs to the G-protein coupled receptor 2 family. In terms of assembly, heterodimer; heterodimerizes with GPER1. Interacts (via N-terminal extracellular domain) with CRH and UCN. Interacts with DLG1; this inhibits endocytosis of CRHR1 after agonist binding. C-terminal Ser or Thr residues may be phosphorylated. In terms of processing, phosphorylation at Ser-301 by PKA prevents maximal coupling to Gq-protein, and thereby negatively regulates downstream signaling.

It localises to the cell membrane. The protein localises to the endosome. In terms of biological role, G-protein coupled receptor for CRH (corticotropin-releasing factor) and UCN (urocortin). Has high affinity for CRH and UCN. Ligand binding causes a conformation change that triggers signaling via guanine nucleotide-binding proteins (G proteins) and down-stream effectors, such as adenylate cyclase. Promotes the activation of adenylate cyclase, leading to increased intracellular cAMP levels. Inhibits the activity of the calcium channel CACNA1H. Required for normal embryonic development of the adrenal gland and for normal hormonal responses to stress. Plays a role in the response to anxiogenic stimuli. This is Corticotropin-releasing factor receptor 1 (CRHR1) from Ovis aries (Sheep).